We begin with the raw amino-acid sequence, 469 residues long: Neuraminidase (469 aa).

Over 1-12 the chain is Intravirion; sequence MNTNQRIITIGT. Positions 11–33 are involved in apical transport and lipid raft association; it reads GTICLIVGIISLLLQIGNIILLW. Residues 13–33 form a helical membrane-spanning segment; it reads ICLIVGIISLLLQIGNIILLW. Over 34–469 the chain is Virion surface; it reads MSHSIQTGEK…GADLPFTIDK (436 aa). The hypervariable stalk region stretch occupies residues 36–90; sequence HSIQTGEKSHPKVCNQSVITYENNTWVNQTYVNISNTNIAAGQGVTPIILAGNSS. 5 N-linked (GlcNAc...) asparagine; by host glycosylation sites follow: asparagine 50, asparagine 58, asparagine 63, asparagine 68, and asparagine 88. The head of neuraminidase stretch occupies residues 91–469; it reads LCPISGWAIY…GADLPFTIDK (379 aa). Cystine bridges form between cysteine 92/cysteine 417, cysteine 124/cysteine 129, cysteine 184/cysteine 231, cysteine 233/cysteine 238, cysteine 279/cysteine 292, cysteine 281/cysteine 290, cysteine 318/cysteine 335, and cysteine 421/cysteine 446. Residue arginine 118 coordinates substrate. Residue asparagine 146 is glycosylated (N-linked (GlcNAc...) asparagine; by host). Aspartate 151 serves as the catalytic Proton donor/acceptor. Residue arginine 152 coordinates substrate. A glycan (N-linked (GlcNAc...) asparagine; by host) is linked at asparagine 235. 277–278 is a substrate binding site; that stretch reads EE. Arginine 293 lines the substrate pocket. Aspartate 294, aspartate 324, and asparagine 344 together coordinate Ca(2+). Arginine 368 provides a ligand contact to substrate. The active-site Nucleophile is tyrosine 402.

The protein belongs to the glycosyl hydrolase 34 family. As to quaternary structure, homotetramer. Ca(2+) is required as a cofactor. In terms of processing, N-glycosylated.

The protein resides in the virion membrane. The protein localises to the host apical cell membrane. It carries out the reaction Hydrolysis of alpha-(2-&gt;3)-, alpha-(2-&gt;6)-, alpha-(2-&gt;8)- glycosidic linkages of terminal sialic acid residues in oligosaccharides, glycoproteins, glycolipids, colominic acid and synthetic substrates.. Its activity is regulated as follows. Inhibited by the neuraminidase inhibitors zanamivir (Relenza) and oseltamivir (Tamiflu). These drugs interfere with the release of progeny virus from infected cells and are effective against all influenza strains. Resistance to neuraminidase inhibitors is quite rare. Its function is as follows. Catalyzes the removal of terminal sialic acid residues from viral and cellular glycoconjugates. Cleaves off the terminal sialic acids on the glycosylated HA during virus budding to facilitate virus release. Additionally helps virus spread through the circulation by further removing sialic acids from the cell surface. These cleavages prevent self-aggregation and ensure the efficient spread of the progeny virus from cell to cell. Otherwise, infection would be limited to one round of replication. Described as a receptor-destroying enzyme because it cleaves a terminal sialic acid from the cellular receptors. May facilitate viral invasion of the upper airways by cleaving the sialic acid moieties on the mucin of the airway epithelial cells. Likely to plays a role in the budding process through its association with lipid rafts during intracellular transport. May additionally display a raft-association independent effect on budding. Plays a role in the determination of host range restriction on replication and virulence. Sialidase activity in late endosome/lysosome traffic seems to enhance virus replication. The protein is Neuraminidase of Influenza A virus (strain A/New Jersey/8/1976 H1N1).